An 842-amino-acid polypeptide reads, in one-letter code: Valine--tRNA ligase (842 aa).

The short motif at 86 to 96 (PFTSGELHMGH) is the 'HIGH' region element. The short motif at 572–576 (RMSKS) is the 'KMSKS' region element. Lys-575 contributes to the ATP binding site.

This sequence belongs to the class-I aminoacyl-tRNA synthetase family. ValS type 2 subfamily.

The protein resides in the cytoplasm. The enzyme catalyses tRNA(Val) + L-valine + ATP = L-valyl-tRNA(Val) + AMP + diphosphate. In terms of biological role, catalyzes the attachment of valine to tRNA(Val). As ValRS can inadvertently accommodate and process structurally similar amino acids such as threonine, to avoid such errors, it has a 'posttransfer' editing activity that hydrolyzes mischarged Thr-tRNA(Val) in a tRNA-dependent manner. The chain is Valine--tRNA ligase from Saccharolobus solfataricus (strain ATCC 35092 / DSM 1617 / JCM 11322 / P2) (Sulfolobus solfataricus).